Consider the following 245-residue polypeptide: Polynucleotide 3'-phosphatase (245 aa).

Belongs to the DNA 3' phosphatase family.

The protein localises to the nucleus. The catalysed reaction is a 3'end (2'-deoxyribonucleotide 3'-phosphate)-DNA + H2O = a 3'-end 2'-deoxyribonucleotide-DNA + phosphate. Its function is as follows. Dephosphorylate DNA's 3'-phosphate termini. Has a role in the repair of breaks in single-stranded DNA. In Saccharomyces mikatae (Yeast), this protein is Polynucleotide 3'-phosphatase (TPP1).